A 479-amino-acid chain; its full sequence is Cardiolipin synthase A (479 aa).

2 helical membrane passes run 8–28 and 38–58; these read FFGY…LHAV and IAWA…YLVF. 2 consecutive PLD phosphodiesterase domains span residues 218–245 and 392–419; these read VNFR…GDEY and QPGF…DNRS. Active-site residues include H223, K225, D230, H397, K399, and D404.

It belongs to the phospholipase D family. Cardiolipin synthase subfamily. ClsA sub-subfamily.

It localises to the cell inner membrane. The catalysed reaction is 2 a 1,2-diacyl-sn-glycero-3-phospho-(1'-sn-glycerol) = a cardiolipin + glycerol. Functionally, catalyzes the reversible phosphatidyl group transfer from one phosphatidylglycerol molecule to another to form cardiolipin (CL) (diphosphatidylglycerol) and glycerol. The polypeptide is Cardiolipin synthase A (Pseudomonas putida (strain GB-1)).